The following is a 637-amino-acid chain: Extracellular metalloproteinase 2 (637 aa).

The signal sequence occupies residues 1-20 (MRSFLLASLASVATLKSAQA). A propeptide spanning residues 21–244 (HPAHSTRGLS…VHAVVDYSAD (224 aa)) is cleaved from the precursor. Residues asparagine 302, asparagine 328, asparagine 337, and asparagine 413 are each glycosylated (N-linked (GlcNAc...) asparagine). Residue histidine 430 participates in Zn(2+) binding. The active site involves glutamate 431. Position 434 (histidine 434) interacts with Zn(2+).

Belongs to the peptidase M36 family. Requires Zn(2+) as cofactor.

Its subcellular location is the secreted. Functionally, secreted metalloproteinase that allows assimilation of proteinaceous substrates. In Phaeosphaeria nodorum (strain SN15 / ATCC MYA-4574 / FGSC 10173) (Glume blotch fungus), this protein is Extracellular metalloproteinase 2 (MEP2).